The primary structure comprises 271 residues: tRNA pseudouridine synthase A (271 aa).

Asp-54 serves as the catalytic Nucleophile. Tyr-112 contacts substrate.

This sequence belongs to the tRNA pseudouridine synthase TruA family. Homodimer.

The enzyme catalyses uridine(38/39/40) in tRNA = pseudouridine(38/39/40) in tRNA. Functionally, formation of pseudouridine at positions 38, 39 and 40 in the anticodon stem and loop of transfer RNAs. This chain is tRNA pseudouridine synthase A, found in Acinetobacter baylyi (strain ATCC 33305 / BD413 / ADP1).